A 67-amino-acid chain; its full sequence is Large ribosomal subunit protein uL29 (67 aa).

This sequence belongs to the universal ribosomal protein uL29 family.

The protein is Large ribosomal subunit protein uL29 of Solibacter usitatus (strain Ellin6076).